We begin with the raw amino-acid sequence, 179 residues long: Large ribosomal subunit protein uL5 (179 aa).

In terms of assembly, contacts the P site tRNA. Forms a bridge to the 30S subunit in the 70S ribosome. Part of the 50S ribosomal subunit. Part of the 5S rRNA/L5/L18 subcomplex; in this organism only 2 proteins, L5 and L18 have been shown to be part of the 5S rRNA subcomplex, unlike E.coli and T.thermophilus where L25 (TL5) is also found. Has been shown to bind 5S rRNA.

In terms of biological role, this is one of the proteins that bind and probably mediate the attachment of the 5S RNA into the large ribosomal subunit, where it forms part of the central protuberance. In the 70S ribosome it contacts protein S13 of the 30S subunit (bridge B1b), connecting the 2 subunits; this bridge is implicated in subunit movement. Contacts the P site tRNA; the 5S rRNA and some of its associated proteins might help stabilize positioning of ribosome-bound tRNAs. The polypeptide is Large ribosomal subunit protein uL5 (rplE) (Geobacillus stearothermophilus (Bacillus stearothermophilus)).